Here is a 58-residue protein sequence, read N- to C-terminus: U11-myrmicitoxin-Tb1a (58 aa).

A propeptide spanning residues 1-24 is cleaved from the precursor; it reads LAMAMGDAVADAQARAMAAAYAIA. The cysteines at positions 34 and 57 are disulfide-linked.

It belongs to the formicidae venom precursor-01 superfamily. As to expression, expressed by the venom gland.

It is found in the secreted. The protein resides in the target cell membrane. Neurotoxin that causes irreversible rapid flaccid paralysis in blowflies and honeybees upon intrathoracic injection. Causes a quick and irreversible cytolytic effect (at 10 uM) indicating it possibly acts as a pore-forming peptide. Shows only weak effect on aphids (A.pisum) at high doses 24 hours post intrathoracic injection. In vitro, is not cytotoxic on the dipteran S2 Drosophila embryonic cell line. In Tetramorium bicarinatum (Tramp ant), this protein is U11-myrmicitoxin-Tb1a.